The sequence spans 360 residues: 3-dehydroquinate synthase (360 aa).

NAD(+)-binding positions include 70 to 75, 104 to 108, 128 to 129, Lys141, and Lys150; these read DGEKYK, GVIGD, and TT. 3 residues coordinate Zn(2+): Glu183, His246, and His263.

This sequence belongs to the sugar phosphate cyclases superfamily. Dehydroquinate synthase family. Co(2+) is required as a cofactor. Requires Zn(2+) as cofactor. It depends on NAD(+) as a cofactor.

It localises to the cytoplasm. The enzyme catalyses 7-phospho-2-dehydro-3-deoxy-D-arabino-heptonate = 3-dehydroquinate + phosphate. It participates in metabolic intermediate biosynthesis; chorismate biosynthesis; chorismate from D-erythrose 4-phosphate and phosphoenolpyruvate: step 2/7. Catalyzes the conversion of 3-deoxy-D-arabino-heptulosonate 7-phosphate (DAHP) to dehydroquinate (DHQ). This chain is 3-dehydroquinate synthase, found in Acinetobacter baumannii (strain AYE).